Reading from the N-terminus, the 316-residue chain is protein SLOW GREEN 1, chloroplastic (316 aa).

The N-terminal 39 residues, 1-39, are a transit peptide targeting the chloroplast; sequence MISSLSASSSLVSSFVAVKATPVTGPLIPRRDLLSIRIR. TPR repeat units follow at residues 118–151, 152–185, 226–259, and 261–293; these read VETL…QPEE, TEWK…NPLS, RDVR…DPKD, and RPYF…SPKK.

Ubiquitous. Preferentially expressed in newly formed green tissues.

The protein resides in the plastid. The protein localises to the chloroplast. In terms of biological role, required for the early stage of chloroplast development. May be involved in chloroplast protein biosynthesis and/or degradation. This is protein SLOW GREEN 1, chloroplastic from Arabidopsis thaliana (Mouse-ear cress).